The chain runs to 1021 residues: Immunoglobulin superfamily member 2 (1021 aa).

An N-terminal signal peptide occupies residues 1 to 20; that stretch reads MAGISYVASFFLLLTKLSIG. Topologically, residues 21 to 954 are extracellular; it reads QREVTVQKGP…LPSRICSSAP (934 aa). 7 consecutive Ig-like C2-type domains span residues 22-139, 144-265, 279-389, 408-525, 541-651, 656-794, and 808-925; these read REVT…AKTN, PDTL…WMFI, PAVK…RTGS, PAAR…RDLS, LQVS…NSLY, PRAS…WHKL, and PTGS…KWIN. 2 cysteine pairs are disulfide-bonded: cysteine 43-cysteine 121 and cysteine 168-cysteine 249. An N-linked (GlcNAc...) asparagine glycan is attached at asparagine 44. Residues 253–255 carry the EWI motif motif; sequence EWI. Cystine bridges form between cysteine 304-cysteine 377, cysteine 434-cysteine 511, cysteine 562-cysteine 640, cysteine 697-cysteine 778, and cysteine 834-cysteine 909. Asparagine 322 carries N-linked (GlcNAc...) asparagine glycosylation. Residues 955–975 form a helical membrane-spanning segment; the sequence is LLYFLFICPFVLLLLLLISLL. Residues 976-1021 lie on the Cytoplasmic side of the membrane; the sequence is CLYWKARKLSTLRSNTRKEKALWVDLKEAGGVTTNRREDEEEDEGN.

Post-translationally, N-glycosylated. Expressed in lung, thymus and small intestine. Detected in cutaneous dendritic cells, activated T-cells, monocytes and granulocytes as well as with epithelial cells with dendritic morphology. Expressed in some leukemic cells, the CD4(+) CD56(+) blastic tumor cells, as well as in Langerhans cells from LCH (Langerhans cell histiocytosis) patients.

It is found in the membrane. In terms of biological role, plays a role as inhibitor of T-cells proliferation induced by CD3. Inhibits expression of IL2RA on activated T-cells and secretion of IL2. Inhibits tyrosine kinases that are required for IL2 production and cellular proliferation. Inhibits phospholipase C-gamma-1/PLCG1 phosphorylation and subsequent CD3-induced changes in intracellular free calcium. Prevents nuclear translocation of nuclear factor of activated T-cell to the nucleus. Plays a role in the inhibition of T-cell proliferation via IL10 secretion by cutaneous dendritic cells. May be a marker of CD4(+) CD56(+) leukemic tumor cells. In Homo sapiens (Human), this protein is Immunoglobulin superfamily member 2 (CD101).